The primary structure comprises 483 residues: 23S rRNA (uracil(1939)-C(5))-methyltransferase RlmD (483 aa).

A compositionally biased stretch (basic residues) spans methionine 1–arginine 11. The tract at residues methionine 1–glycine 36 is disordered. The region spanning glutamate 29 to glutamate 90 is the TRAM domain. Residues cysteine 103, cysteine 109, cysteine 112, and cysteine 189 each contribute to the [4Fe-4S] cluster site. The S-adenosyl-L-methionine site is built by glutamine 298, phenylalanine 332, asparagine 337, glutamate 353, aspartate 379, and aspartate 401. The active-site Nucleophile is the cysteine 427.

The protein belongs to the class I-like SAM-binding methyltransferase superfamily. RNA M5U methyltransferase family. RlmD subfamily.

The enzyme catalyses uridine(1939) in 23S rRNA + S-adenosyl-L-methionine = 5-methyluridine(1939) in 23S rRNA + S-adenosyl-L-homocysteine + H(+). Catalyzes the formation of 5-methyl-uridine at position 1939 (m5U1939) in 23S rRNA. This is 23S rRNA (uracil(1939)-C(5))-methyltransferase RlmD from Halomonas elongata (strain ATCC 33173 / DSM 2581 / NBRC 15536 / NCIMB 2198 / 1H9).